The sequence spans 94 residues: C-C motif chemokine 17 (94 aa).

The signal sequence occupies residues 1–23 (MAPLKMLALVTLLLGASLQHIHA). 2 disulfide bridges follow: Cys33–Cys57 and Cys34–Cys73.

This sequence belongs to the intercrine beta (chemokine CC) family. Constitutively expressed in thymus. Detected at lower levels in the lung, colon and small intestine. Expressed in stimulated peripheral blood mononuclear cells, but not in resting cells.

It is found in the secreted. Chemokine, which displays chemotactic activity for T lymphocytes, preferentially Th2 cells, but not monocytes or granulocytes. Therefore plays an important role in a wide range of inflammatory and immunological processes. Acts by binding to CCR4 at T-cell surface. Mediates GM-CSF/CSF2-driven pain and inflammation. In the brain, required to maintain the typical, highly branched morphology of hippocampal microglia under homeostatic conditions. May be important for the appropriate adaptation of microglial morphology and synaptic plasticity to acute lipopolysaccharide (LPS)-induced neuroinflammation. Plays a role in wound healing, mainly by inducing fibroblast migration into the wound. This chain is C-C motif chemokine 17 (CCL17), found in Homo sapiens (Human).